We begin with the raw amino-acid sequence, 217 residues long: Ribonuclease HII (217 aa).

Residues 25–215 (KLIAGVDESG…VKHVISDINR (191 aa)) form the RNase H type-2 domain. D31, E32, and D123 together coordinate a divalent metal cation.

This sequence belongs to the RNase HII family. Mn(2+) is required as a cofactor. The cofactor is Mg(2+).

It localises to the cytoplasm. The enzyme catalyses Endonucleolytic cleavage to 5'-phosphomonoester.. In terms of biological role, endonuclease that specifically degrades the RNA of RNA-DNA hybrids. This Blochmanniella pennsylvanica (strain BPEN) protein is Ribonuclease HII.